Reading from the N-terminus, the 339-residue chain is Serine racemase (339 aa).

The ATP site is built by Ser43 and Lys63. Catalysis depends on Lys68, which acts as the Proton acceptor. Lys68 bears the N6-(pyridoxal phosphate)lysine mark. Ca(2+) is bound at residue Thr90. The active-site Proton acceptor is Ser93. Asn95 is a binding site for pyridoxal 5'-phosphate. The residue at position 122 (Cys122) is an S-nitrosocysteine. Position 130 (Tyr130) interacts with ATP. Asp187 lines the Mg(2+) pocket. Pyridoxal 5'-phosphate is bound by residues Gly195, Gly196, and Gly197. Glu219, Ala223, and Asp225 together coordinate Ca(2+). Mg(2+)-binding residues include Glu219, Ala223, and Asp225. Positions 219, 223, and 225 each coordinate Mn(2+). Lys287 provides a ligand contact to ATP. Ser323 lines the pyridoxal 5'-phosphate pocket. Asn326 is an ATP binding site.

This sequence belongs to the serine/threonine dehydratase family. It depends on Mg(2+) as a cofactor. Requires Mn(2+) as cofactor. Ca(2+) serves as cofactor. The cofactor is pyridoxal 5'-phosphate.

The catalysed reaction is L-serine = D-serine. It carries out the reaction L-serine = pyruvate + NH4(+). The enzyme catalyses D-serine = pyruvate + NH4(+). Its function is as follows. Catalyzes the synthesis of D-serine from L-serine. Has dehydratase activity towards both L-serine and D-serine. This chain is Serine racemase, found in Oryza sativa subsp. indica (Rice).